Reading from the N-terminus, the 242-residue chain is Endothelial protein C receptor (242 aa).

The N-terminal stretch at 1–17 is a signal peptide; the sequence is MLTKFLPLLLLLLPGCA. Residues 18–214 lie on the Extracellular side of the membrane; it reads LCNSDGSQSL…GSQTGRSYTS (197 aa). N-linked (GlcNAc...) asparagine glycans are attached at residues N46, N63, N140, N166, and N176. 2 disulfide bridges follow: C119–C190 and C223–C236. The helical transmembrane segment at 215–235 threads the bilayer; that stretch reads LVLGILMGCFIIAGVAVGIFM. Residues 236 to 242 lie on the Cytoplasmic side of the membrane; the sequence is CTSGRRC.

Expressed in endothelial cells.

It localises to the membrane. Binds activated protein C. Enhances protein C activation by the thrombin-thrombomodulin complex; plays a role in the protein C pathway controlling blood coagulation. This chain is Endothelial protein C receptor (Procr), found in Mus musculus (Mouse).